The primary structure comprises 104 residues: Large ribosomal subunit protein uL24 (104 aa).

It belongs to the universal ribosomal protein uL24 family. As to quaternary structure, part of the 50S ribosomal subunit.

In terms of biological role, one of two assembly initiator proteins, it binds directly to the 5'-end of the 23S rRNA, where it nucleates assembly of the 50S subunit. Functionally, one of the proteins that surrounds the polypeptide exit tunnel on the outside of the subunit. The protein is Large ribosomal subunit protein uL24 of Methylorubrum populi (strain ATCC BAA-705 / NCIMB 13946 / BJ001) (Methylobacterium populi).